The chain runs to 187 residues: ATP synthase subunit delta, chloroplastic (187 aa).

This sequence belongs to the ATPase delta chain family. In terms of assembly, F-type ATPases have 2 components, F(1) - the catalytic core - and F(0) - the membrane proton channel. F(1) has five subunits: alpha(3), beta(3), gamma(1), delta(1), epsilon(1). CF(0) has four main subunits: a(1), b(1), b'(1) and c(10-14). The alpha and beta chains form an alternating ring which encloses part of the gamma chain. F(1) is attached to F(0) by a central stalk formed by the gamma and epsilon chains, while a peripheral stalk is formed by the delta, b and b' chains.

Its subcellular location is the plastid. It is found in the chloroplast thylakoid membrane. F(1)F(0) ATP synthase produces ATP from ADP in the presence of a proton or sodium gradient. F-type ATPases consist of two structural domains, F(1) containing the extramembraneous catalytic core and F(0) containing the membrane proton channel, linked together by a central stalk and a peripheral stalk. During catalysis, ATP synthesis in the catalytic domain of F(1) is coupled via a rotary mechanism of the central stalk subunits to proton translocation. Functionally, this protein is part of the stalk that links CF(0) to CF(1). It either transmits conformational changes from CF(0) to CF(1) or is implicated in proton conduction. The polypeptide is ATP synthase subunit delta, chloroplastic (Trieres chinensis (Marine centric diatom)).